The chain runs to 1442 residues: Sulfite reductase [NADPH] subunit beta (1442 aa).

A Flavodoxin-like domain is found at 682-831 (LHVYYASDGG…AYSEWEPKLW (150 aa)). A Phosphoserine modification is found at Ser-903. Residues Cys-1300, Cys-1306, Cys-1345, and Cys-1349 each coordinate [4Fe-4S] cluster. Residue Cys-1349 participates in siroheme binding.

Belongs to the nitrite and sulfite reductase 4Fe-4S domain family. As to quaternary structure, alpha(2)-beta(2). The alpha component is a flavoprotein, the beta component is a hemoprotein. Requires siroheme as cofactor. [4Fe-4S] cluster serves as cofactor.

Its subcellular location is the cytoplasm. The catalysed reaction is hydrogen sulfide + 3 NADP(+) + 3 H2O = sulfite + 3 NADPH + 4 H(+). Its pathway is sulfur metabolism; hydrogen sulfide biosynthesis; hydrogen sulfide from sulfite (NADPH route): step 1/1. Functionally, catalyzes the reduction of sulfite to sulfide, one of several activities required for the biosynthesis of L-cysteine from sulfate. This Saccharomyces cerevisiae (strain ATCC 204508 / S288c) (Baker's yeast) protein is Sulfite reductase [NADPH] subunit beta (MET5).